A 239-amino-acid chain; its full sequence is Glucosamine-6-phosphate deaminase (239 aa).

Aspartate 62 (proton acceptor; for enolization step) is an active-site residue. Asparagine 128 (for ring-opening step) is an active-site residue. The active-site Proton acceptor; for ring-opening step is histidine 130. Glutamate 135 serves as the catalytic For ring-opening step.

The protein belongs to the glucosamine/galactosamine-6-phosphate isomerase family. NagB subfamily.

It carries out the reaction alpha-D-glucosamine 6-phosphate + H2O = beta-D-fructose 6-phosphate + NH4(+). The protein operates within amino-sugar metabolism; N-acetylneuraminate degradation; D-fructose 6-phosphate from N-acetylneuraminate: step 5/5. Functionally, catalyzes the reversible isomerization-deamination of glucosamine 6-phosphate (GlcN6P) to form fructose 6-phosphate (Fru6P) and ammonium ion. This Lactobacillus acidophilus (strain ATCC 700396 / NCK56 / N2 / NCFM) protein is Glucosamine-6-phosphate deaminase.